Here is a 269-residue protein sequence, read N- to C-terminus: Regulatory protein RecX (269 aa).

It belongs to the RecX family.

The protein localises to the cytoplasm. Modulates RecA activity. The sequence is that of Regulatory protein RecX from Lactococcus lactis subsp. cremoris (strain MG1363).